The following is a 190-amino-acid chain: Probable GTP-binding protein EngB (190 aa).

The 169-residue stretch at 22 to 190 (VKREVAFAGR…LNELLKILIP (169 aa)) folds into the EngB-type G domain. GTP-binding positions include 30-37 (GRSNVGKS), 56-60 (GKTRS), 74-77 (DLPG), 141-144 (TKTD), and 173-175 (FSA). Mg(2+)-binding residues include S37 and T58.

The protein belongs to the TRAFAC class TrmE-Era-EngA-EngB-Septin-like GTPase superfamily. EngB GTPase family. It depends on Mg(2+) as a cofactor.

In terms of biological role, necessary for normal cell division and for the maintenance of normal septation. This is Probable GTP-binding protein EngB from Kosmotoga olearia (strain ATCC BAA-1733 / DSM 21960 / TBF 19.5.1).